A 620-amino-acid polypeptide reads, in one-letter code: Sterile alpha motif domain-containing protein 15 (620 aa).

The interval 1–394 (MSEVSGDYNS…PNYPAGKDKL (394 aa)) is disordered. Basic and acidic residues-rich tracts occupy residues 62–83 (TRTR…DLQR), 106–125 (IDPE…KSVE), and 135–180 (TKSE…HFKS). Over residues 181-191 (TEQSGTEQPEQ) the composition is skewed to polar residues. The segment covering 233–242 (RPLKASKKAQ) has biased composition (basic residues). The span at 261–270 (LLDDQEETQE) shows a compositional bias: acidic residues. Composition is skewed to basic and acidic residues over residues 271–286 (ESIK…DRKP), 295–315 (KSSE…DKDP), 323–337 (FPKE…KTGD), and 347–382 (IQEK…KPES). Residues 480–543 (WSPERVAEWI…SYHTRVLLGI (64 aa)) enclose the SAM domain. Basic and acidic residues predominate over residues 594–604 (EIKAEEKKEDA). The interval 594 to 620 (EIKAEEKKEDALPENSLEENEELYEAT) is disordered. A compositionally biased stretch (acidic residues) spans 609–620 (SLEENEELYEAT).

The chain is Sterile alpha motif domain-containing protein 15 (Samd15) from Mus musculus (Mouse).